A 502-amino-acid chain; its full sequence is Probable mitochondrial-processing peptidase subunit alpha (502 aa).

Belongs to the peptidase M16 family. In terms of assembly, heterodimer of mas2 (alpha) and mas1 (beta) subunits, forming the mitochondrial processing protease (MPP) in which mas2 is involved in substrate recognition and binding and mas1 is the catalytic subunit.

The protein localises to the mitochondrion matrix. In terms of biological role, substrate recognition and binding subunit of the essential mitochondrial processing protease (MPP), which cleaves the mitochondrial sequence off newly imported precursors proteins. In Schizosaccharomyces pombe (strain 972 / ATCC 24843) (Fission yeast), this protein is Probable mitochondrial-processing peptidase subunit alpha (mas2).